The chain runs to 719 residues: Protein psiJ (719 aa).

The first 21 residues, 1 to 21, serve as a signal peptide directing secretion; sequence MVSNLLKGLILFSLFISFLNG. Over 22–653 the chain is Extracellular; it reads DDKIFPVTIR…RCQSVAVKAG (632 aa). N-linked (GlcNAc...) asparagine glycosylation is found at Asn46, Asn59, Asn86, Asn113, Asn301, Asn372, Asn435, Asn457, Asn562, and Asn628. A PA14 domain is found at 112 to 260; the sequence is QNQTDPRVFY…KDYCGVCEGT (149 aa). A helical transmembrane segment spans residues 654-674; sequence VIGGAAIAGVVVGGAVALGLA. The Cytoplasmic portion of the chain corresponds to 675 to 719; that stretch reads LFGAKAGYNHWMSLKNNQMATSSVNPLYEPSPHQGTNPLWEAPPT.

Belongs to the prespore-cell-inducing factor family.

It localises to the membrane. This is Protein psiJ (psiJ) from Dictyostelium discoideum (Social amoeba).